A 399-amino-acid polypeptide reads, in one-letter code: Dual-specificity RNA methyltransferase RlmN (399 aa).

Glutamate 120 (proton acceptor) is an active-site residue. Residues 126–367 (EEGRGTLCVS…SPVRTPRGRD (242 aa)) form the Radical SAM core domain. Residues cysteine 133 and cysteine 372 are joined by a disulfide bond. [4Fe-4S] cluster-binding residues include cysteine 140, cysteine 144, and cysteine 147. Residues 198 to 199 (GE), serine 230, 252 to 254 (SLH), and asparagine 329 contribute to the S-adenosyl-L-methionine site. The active-site S-methylcysteine intermediate is the cysteine 372.

This sequence belongs to the radical SAM superfamily. RlmN family. Requires [4Fe-4S] cluster as cofactor.

The protein resides in the cytoplasm. The enzyme catalyses adenosine(2503) in 23S rRNA + 2 reduced [2Fe-2S]-[ferredoxin] + 2 S-adenosyl-L-methionine = 2-methyladenosine(2503) in 23S rRNA + 5'-deoxyadenosine + L-methionine + 2 oxidized [2Fe-2S]-[ferredoxin] + S-adenosyl-L-homocysteine. It catalyses the reaction adenosine(37) in tRNA + 2 reduced [2Fe-2S]-[ferredoxin] + 2 S-adenosyl-L-methionine = 2-methyladenosine(37) in tRNA + 5'-deoxyadenosine + L-methionine + 2 oxidized [2Fe-2S]-[ferredoxin] + S-adenosyl-L-homocysteine. In terms of biological role, specifically methylates position 2 of adenine 2503 in 23S rRNA and position 2 of adenine 37 in tRNAs. m2A2503 modification seems to play a crucial role in the proofreading step occurring at the peptidyl transferase center and thus would serve to optimize ribosomal fidelity. This chain is Dual-specificity RNA methyltransferase RlmN, found in Parvibaculum lavamentivorans (strain DS-1 / DSM 13023 / NCIMB 13966).